We begin with the raw amino-acid sequence, 191 residues long: Cell division protein SepF (191 aa).

The span at 156-167 (EEASPSNMSNKG) shows a compositional bias: polar residues. The segment at 156–191 (EEASPSNMSNKGNDLISKETSPAPEPAWGETVATAL) is disordered.

The protein belongs to the SepF family. As to quaternary structure, homodimer. Interacts with FtsZ.

The protein resides in the cytoplasm. Its function is as follows. Cell division protein that is part of the divisome complex and is recruited early to the Z-ring. Probably stimulates Z-ring formation, perhaps through the cross-linking of FtsZ protofilaments. Its function overlaps with FtsA. The sequence is that of Cell division protein SepF from Prochlorococcus marinus (strain NATL2A).